We begin with the raw amino-acid sequence, 189 residues long: Elongation factor P (189 aa).

The protein belongs to the elongation factor P family.

Its subcellular location is the cytoplasm. The protein operates within protein biosynthesis; polypeptide chain elongation. In terms of biological role, involved in peptide bond synthesis. Stimulates efficient translation and peptide-bond synthesis on native or reconstituted 70S ribosomes in vitro. Probably functions indirectly by altering the affinity of the ribosome for aminoacyl-tRNA, thus increasing their reactivity as acceptors for peptidyl transferase. This Rhizobium radiobacter (Agrobacterium tumefaciens) protein is Elongation factor P.